We begin with the raw amino-acid sequence, 55 residues long: Large ribosomal subunit protein bL33 (55 aa).

The protein belongs to the bacterial ribosomal protein bL33 family.

This chain is Large ribosomal subunit protein bL33, found in Erythrobacter litoralis (strain HTCC2594).